A 70-amino-acid polypeptide reads, in one-letter code: Large ribosomal subunit protein bL31 (70 aa).

The Zn(2+) site is built by C16, C18, C36, and C39.

This sequence belongs to the bacterial ribosomal protein bL31 family. Type A subfamily. In terms of assembly, part of the 50S ribosomal subunit. The cofactor is Zn(2+).

Binds the 23S rRNA. This chain is Large ribosomal subunit protein bL31, found in Fervidobacterium nodosum (strain ATCC 35602 / DSM 5306 / Rt17-B1).